A 508-amino-acid polypeptide reads, in one-letter code: BTB/POZ domain-containing protein At3g03510 (508 aa).

The BTB domain occupies 11-77 (QDLDLYVKGV…CYGYKIELSA (67 aa)). The NPH3 domain occupies 156–414 (TRLLQDLITL…MQVLFVSQMQ (259 aa)). Tyr-355 is modified (phosphotyrosine).

This sequence belongs to the NPH3 family.

Its pathway is protein modification; protein ubiquitination. In terms of biological role, may act as a substrate-specific adapter of an E3 ubiquitin-protein ligase complex (CUL3-RBX1-BTB) which mediates the ubiquitination and subsequent proteasomal degradation of target proteins. This is BTB/POZ domain-containing protein At3g03510 from Arabidopsis thaliana (Mouse-ear cress).